Reading from the N-terminus, the 138-residue chain is Acidic phospholipase A2 beta (138 aa).

The signal sequence occupies residues 1–16 (MRTLWIVAVLLLGVEG). 7 disulfides stabilise this stretch: Cys-42-Cys-131, Cys-44-Cys-60, Cys-59-Cys-111, Cys-65-Cys-138, Cys-66-Cys-104, Cys-73-Cys-97, and Cys-91-Cys-102. The Ca(2+) site is built by Tyr-43, Gly-45, and Gly-47. His-63 is a catalytic residue. Asp-64 contributes to the Ca(2+) binding site. The active site involves Asp-105.

This sequence belongs to the phospholipase A2 family. Group II subfamily. D49 sub-subfamily. In terms of assembly, dimer. It depends on Ca(2+) as a cofactor. As to expression, expressed by the venom gland.

The protein resides in the secreted. The enzyme catalyses a 1,2-diacyl-sn-glycero-3-phosphocholine + H2O = a 1-acyl-sn-glycero-3-phosphocholine + a fatty acid + H(+). Functionally, PLA2 catalyzes the calcium-dependent hydrolysis of the 2-acyl groups in 3-sn-phosphoglycerides. The polypeptide is Acidic phospholipase A2 beta (Crotalus adamanteus (Eastern diamondback rattlesnake)).